Here is a 408-residue protein sequence, read N- to C-terminus: BRCA1-A complex subunit Abraxas 1 (408 aa).

An MPN domain is found at threonine 7–leucine 155. The stretch at alanine 210–glutamate 272 forms a coiled coil. Residues histidine 335 to phenylalanine 408 are disordered. Over residues arginine 337–arginine 358 the composition is skewed to basic residues. Residues glutamine 394–phenylalanine 408 are compositionally biased toward polar residues. Serine 405 is modified (phosphoserine). Positions serine 405–phenylalanine 408 match the pSXXF motif motif.

The protein belongs to the FAM175 family. Abraxas subfamily. Component of the BRCA1-A complex. Component of the BRISC complex. Homodimer. Interacts directly (when phosphorylated at Ser-405) with brca1. The phosphorylated homodimer can interact directly with two brca1 chains, giving rise to a heterotetramer. Post-translationally, phosphorylation of Ser-405 of the pSXXF motif by ATM or ATR constitutes a specific recognition motif for the BRCT domain of BRCA1.

The protein localises to the nucleus. In terms of biological role, involved in DNA damage response and double-strand break (DSB) repair. Component of the BRCA1-A complex, acting as a central scaffold protein that assembles the various components of the complex and mediates the recruitment of brca1. The BRCA1-A complex specifically recognizes 'Lys-63'-linked ubiquitinated histones H2A and H2AX at DNA lesion sites, leading to target the brca1-bard1 heterodimer to sites of DNA damage at DSBs. This complex also possesses deubiquitinase activity that specifically removes 'Lys-63'-linked ubiquitin on histones H2A and H2AX. The polypeptide is BRCA1-A complex subunit Abraxas 1 (Xenopus laevis (African clawed frog)).